The sequence spans 417 residues: NADH-quinone oxidoreductase subunit D (417 aa).

Belongs to the complex I 49 kDa subunit family. In terms of assembly, NDH-1 is composed of 14 different subunits. Subunits NuoB, C, D, E, F, and G constitute the peripheral sector of the complex.

It is found in the cell inner membrane. It catalyses the reaction a quinone + NADH + 5 H(+)(in) = a quinol + NAD(+) + 4 H(+)(out). NDH-1 shuttles electrons from NADH, via FMN and iron-sulfur (Fe-S) centers, to quinones in the respiratory chain. The immediate electron acceptor for the enzyme in this species is believed to be ubiquinone. Couples the redox reaction to proton translocation (for every two electrons transferred, four hydrogen ions are translocated across the cytoplasmic membrane), and thus conserves the redox energy in a proton gradient. The polypeptide is NADH-quinone oxidoreductase subunit D (Polaromonas naphthalenivorans (strain CJ2)).